A 1857-amino-acid chain; its full sequence is Ankyrin repeat domain-containing protein 31 (1857 aa).

2 disordered regions span residues 1 to 30 and 195 to 215; these read MENGAEASDCDSDETVIEGSVTENEPEDEE and SEPGEEVTQTMTSKETKDEES. A compositionally biased stretch (polar residues) spans 195 to 207; that stretch reads SEPGEEVTQTMTS. ANK repeat units lie at residues 475 to 504, 508 to 537, and 541 to 570; these read FGENLLYKAALHNDVDLVRCCIKNGENVNQ, DGWTALHEASIGGYYQAVSELLKGGADVNV, and YQITPLHDAVMNRHYKVAELLLMSGADPLF. Over residues 676-691 the composition is skewed to polar residues; it reads KFGKSNLNSVKNSRTN. 5 disordered regions span residues 676–711, 813–844, 995–1038, 1046–1065, and 1075–1137; these read KFGKSNLNSVKNSRTNVSKRKGQKNRQQKKTQVDDR, VTTHQQPHTNQEQYSSPYKSLGNNSSNEKGKA, RDSS…TVVH, KAEKRREDLPGNEPINNTDF, and ANSS…QNFR. Residues 692–704 show a composition bias toward basic residues; that stretch reads VSKRKGQKNRQQK. Residues 814–839 are compositionally biased toward polar residues; sequence TTHQQPHTNQEQYSSPYKSLGNNSSN. The segment covering 1008 to 1019 has biased composition (basic and acidic residues); the sequence is SLERKQDTDKNY. Polar residues predominate over residues 1023–1032; that stretch reads GPNTSSSSRP. Basic and acidic residues predominate over residues 1082 to 1136; sequence QRKEKENVRKSDAELTHNDSEAERTLKSCEEKKKNMDSETHSPCDIQEHRKDQNF. ANK repeat units follow at residues 1162 to 1191, 1195 to 1224, and 1228 to 1257; these read KGESQLHVAARGGNLSRVKVLIEARADVNL, AGWTPLHKAASGGFDDVIIELLQAGANVNC, and DGIVPLHGASAGNHLKAAEILLEHGANPNQ. Disordered regions lie at residues 1457–1479, 1540–1570, 1609–1640, and 1663–1697; these read NSDISSDKKSQEPPTMGDSAHAQ, GGLLRSKPTDDAEKIASSSQPAALTPHAENS, DPHSQKLSRCNPKRRNKKTASQQPSAGAAEPL, and AAAASHTDSTQSSLSSASAHQHPTKTVPHRNTTPR. Residues 1555–1570 show a composition bias toward polar residues; it reads ASSSQPAALTPHAENS. A compositionally biased stretch (low complexity) spans 1663–1683; sequence AAAASHTDSTQSSLSSASAHQ. The region spanning 1687-1782 is the RAMA domain; that stretch reads KTVPHRNTTP…TYLGRELVKC (96 aa).

Interacts with REC114; the interaction is direct. Interacts with IHO1. In terms of tissue distribution, present in meiotic cells (at protein level).

It localises to the nucleus. Its subcellular location is the chromosome. Required for DNA double-strand breaks (DSBs) formation during meiotic recombination. Regulates the spatial and temporal patterns of pre-DSB recombinosome assembly and recombination activity by acting as a scaffold that anchors REC114 and other factors to specific genomic locations, thereby regulating DSB formation. Plays a key role in recombination in the pseudoautosomal regions of sex chromosomes. The sequence is that of Ankyrin repeat domain-containing protein 31 from Mus musculus (Mouse).